The primary structure comprises 328 residues: Protein chibby homolog 2 (328 aa).

The segment at 180–231 (NKGASSVQKDTENTTAAGEGSLGPTCQEEHDAKEESTTPTQNDTKIAPSTED) is disordered. Polar residues predominate over residues 182–195 (GASSVQKDTENTTA). Basic and acidic residues predominate over residues 206–215 (QEEHDAKEES). Residues 259-307 (RESLHALQDESKFFQEEYKKLKLQLNNVKNTVSDITTQMEMLEKELIAI) adopt a coiled-coil conformation.

It belongs to the chibby family. SPERT subfamily.

In Gallus gallus (Chicken), this protein is Protein chibby homolog 2 (CBY2).